A 526-amino-acid polypeptide reads, in one-letter code: Outer capsid protein VP5 (526 aa).

The interval 1 to 42 is involved in membrane permeabilization; the sequence is MGKVIRSLNRFGKKVGNALTSNTAKKIYSTIGKAADEFLESE.

This sequence belongs to the orbivirus VP5 family.

It localises to the virion. In terms of biological role, VP5 protein is one of the two proteins (with VP2) which constitute the virus particle outer capsid. Acts as a membrane permeabilization protein that mediates release of viral particles from endosomal compartments into the cytoplasm. Permeabilization activity is probably negatively regulated by VP2 and is triggered by endosomal degradation of VP2 and exposure to low pH. The sequence is that of Outer capsid protein VP5 (Segment-6) from Bluetongue virus 1 (isolate South Africa) (BTV 1).